The sequence spans 575 residues: Stage VI sporulation protein D (575 aa).

Residues 159 to 502 form a disordered region; it reads EELSEPPAHS…ETKEPQTKES (344 aa). Residues 200-212 are compositionally biased toward basic and acidic residues; that stretch reads GLREELETEKAES. Composition is skewed to acidic residues over residues 229–238 and 249–264; these read KEEEESEELA and ETEE…EIEI. 3 stretches are compositionally biased toward basic and acidic residues: residues 266-275, 283-302, and 310-325; these read EIVKAKKETA, DVRE…HVGA, and AELH…KEET. The span at 438–448 shows a compositional bias: acidic residues; it reads EEEEQEEESFE. Residues 449–464 show a composition bias toward basic and acidic residues; sequence IEVRKTPSAEEPKEET. The segment covering 465-474 has biased composition (polar residues); that stretch reads PFQSFQLPES. Residues 493–502 show a composition bias toward basic and acidic residues; sequence ETKEPQTKES. One can recognise a LysM domain in the interval 523–567; the sequence is KICIVQQEDTIERLCERYEITSQQLIRMNSLALDDELKAGQILYI.

Its function is as follows. Required for assembly of a normal spore coat. May be a component of the innermost layer of the spore coat that aids in its adherence to the prespore. The polypeptide is Stage VI sporulation protein D (spoVID) (Bacillus subtilis (strain 168)).